Consider the following 392-residue polypeptide: Neutrophil cytosol factor 1 (392 aa).

The PX domain maps to histidine 4–leucine 125. 2 consecutive SH3 domains span residues isoleucine 156–serine 215 and tyrosine 226–glutamine 285. The disordered stretch occupies residues alanine 290 to valine 392. Serine 304 and serine 305 each carry phosphoserine. Basic residues predominate over residues histidine 310–arginine 319. A phosphoserine mark is found at serine 321, serine 329, and serine 348. Residues isoleucine 376 to lysine 385 are compositionally biased toward basic and acidic residues.

Component of the phagocyte NADPH oxidase complex composed of an obligatory core heterodimer formed by the membrane proteins CYBA and CYBB and the cytosolic regulatory subunits NCF1/p47-phox, NCF2/p67-phox, NCF4/p40-phox and the small GTPase RAC1 or RAC2. Part of a cytosolic complex composed at least by NCF1, NCF2 and NCF4. Interacts (via C-terminus) with NCF2 (via the C-terminal SH3 domain). Interacts with NCF4. Interacts with CYBB. Interacts (via the second SH3 domain) with CYBA; interaction is phosphorylation-dependent. Interacts with NOXA1. Interacts with ADAM15. Interacts with TRAF4. Interacts with FASLG. Interacts with PARK7 (via C-terminus); the interaction is enhanced by LPS and modulates NCF1 phosphorylation and membrane translocation. Phosphorylated by PRKCD; phosphorylation induces activation of NCF1, leading to assembly and activation of the NADPH oxidase complex.

The protein resides in the cytoplasm. The protein localises to the cytosol. It is found in the membrane. Functionally, subunit of the phagocyte NADPH oxidase complex that mediates the transfer of electrons from cytosolic NADPH to O2 to produce the superoxide anion (O2(-)). In the activated complex, electrons are first transferred from NADPH to flavin adenine dinucleotide (FAD) and subsequently transferred via two heme molecules to molecular oxygen, producing superoxide through an outer-sphere reaction. Activation of the NADPH oxidase complex is initiated by the assembly of cytosolic subunits of the NADPH oxidase complex with the core NADPH oxidase complex to form a complex at the plasma membrane or phagosomal membrane. This activation process is initiated by phosphorylation dependent binding of the cytosolic NCF1/p47-phox subunit to the C-terminus of CYBA/p22-phox. The polypeptide is Neutrophil cytosol factor 1 (Bos taurus (Bovine)).